The chain runs to 254 residues: 2-dehydro-3-deoxy-D-gluconate 5-dehydrogenase (254 aa).

The active-site Proton acceptor is Tyr159.

It belongs to the short-chain dehydrogenases/reductases (SDR) family.

It carries out the reaction 2-dehydro-3-deoxy-D-gluconate + NAD(+) = 3-deoxy-D-glycero-2,5-hexodiulosonate + NADH + H(+). Functionally, involved in the degradation of 3,6-anhydro-L-galactose, which is the major monomeric sugar of red macroalgae. Catalyzes the fourth step of the pathway, the reduction of 3-deoxy-D-glycero-2,5-hexodiulosonate (L-DDGal) to 2-dehydro-3-deoxy-D-gluconate (KDG). The protein is 2-dehydro-3-deoxy-D-gluconate 5-dehydrogenase of Pseudoalteromonas atlantica (strain T6c / ATCC BAA-1087).